The primary structure comprises 120 residues: Cytochrome c-550 (120 aa).

Residues 5–25 form a helical membrane-spanning segment; the sequence is PLIPFLLIAVLGIGLTFFLSV. At 26 to 120 the chain is on the periplasmic side; the sequence is KGLDDSREIA…DMAEWVSKIK (95 aa). 4 residues coordinate heme c: Cys60, Cys63, His64, and Met99.

In terms of processing, binds 1 heme c group covalently per subunit.

It is found in the cell membrane. Functionally, not essential for growth on minimal or rich media. This Bacillus subtilis (strain 168) protein is Cytochrome c-550 (cccA).